The sequence spans 185 residues: Ribosome-recycling factor (185 aa).

Positions 140–166 (KRQEKDGDITEDEQRSLEKQVQKVTDD) are disordered.

The protein belongs to the RRF family.

The protein localises to the cytoplasm. Its function is as follows. Responsible for the release of ribosomes from messenger RNA at the termination of protein biosynthesis. May increase the efficiency of translation by recycling ribosomes from one round of translation to another. The protein is Ribosome-recycling factor of Lactobacillus johnsonii (strain CNCM I-12250 / La1 / NCC 533).